A 1220-amino-acid polypeptide reads, in one-letter code: ATP-dependent helicase/deoxyribonuclease subunit B (1220 aa).

One can recognise a UvrD-like helicase ATP-binding domain in the interval 1–281; it reads MSMRFIVGRA…VFLTETHRFE (281 aa). 8-15 serves as a coordination point for ATP; it reads GRAGTGKS. Positions 283–590 constitute a UvrD-like helicase C-terminal domain; it reads AGLKHLERFY…LVGSLDRSRN (308 aa). A [4Fe-4S] cluster-binding site is contributed by C788. Residues 989 to 1008 are disordered; it reads LAEGSKGSEGSEGSEDSEDS. C1128, C1131, and C1137 together coordinate [4Fe-4S] cluster. The segment covering 1162–1171 has biased composition (polar residues); the sequence is RVQSQDSEQY. The interval 1162–1220 is disordered; the sequence is RVQSQDSEQYPEQHPPTSVPGETSRRALQKDGGNSPRGQELIWLGEDEAGAGKEDDGHE. The span at 1211–1220 shows a compositional bias: basic and acidic residues; it reads GAGKEDDGHE.

It belongs to the helicase family. AddB/RexB type 1 subfamily. As to quaternary structure, heterodimer of AddA and AddB. It depends on Mg(2+) as a cofactor. Requires [4Fe-4S] cluster as cofactor.

In terms of biological role, the heterodimer acts as both an ATP-dependent DNA helicase and an ATP-dependent, dual-direction single-stranded exonuclease. Recognizes the chi site generating a DNA molecule suitable for the initiation of homologous recombination. The AddB subunit has 5' -&gt; 3' nuclease activity but not helicase activity. This Desulfitobacterium hafniense (strain Y51) protein is ATP-dependent helicase/deoxyribonuclease subunit B.